Here is a 105-residue protein sequence, read N- to C-terminus: Heat shock protein HspQ (105 aa).

The segment at 80–105 is disordered; the sequence is AHPEQPSLDELAASIRHQLQAPHLRN.

Belongs to the HspQ family.

It localises to the cytoplasm. Its function is as follows. Involved in the degradation of certain denaturated proteins, including DnaA, during heat shock stress. This chain is Heat shock protein HspQ, found in Yersinia pseudotuberculosis serotype O:1b (strain IP 31758).